The primary structure comprises 1203 residues: Kinesin-like protein KIN-14Q (1203 aa).

The disordered stretch occupies residues 1–28 (MEDCCDPLLATDASPRPESFSRSEKDIA). Positions 19 to 28 (SFSRSEKDIA) are enriched in basic and acidic residues. Residues 336 to 395 (ENLVCRAEEEAEGMRSDCEQQRKEMEDMKRMVEELKLENQQKTRECEEALNSLSEIQNEL) are a coiled coil. In terms of domain architecture, Kinesin motor spans 499-825 (NIRVFCRCRP…LNFASRVRGI (327 aa)). 582-589 (GQTGTGKT) lines the ATP pocket. Positions 846–901 (VEKWKQDMKGKDEQIRKMEETMYGLEAKIKERDTKNKTLQDKVKELESQLLVERKL) form a coiled coil. A disordered region spans residues 907–931 (DTKIAEQQTKQQTEDENNTSKRPPL).

Belongs to the TRAFAC class myosin-kinesin ATPase superfamily. Kinesin family. KIN-14 subfamily.

The protein is Kinesin-like protein KIN-14Q of Arabidopsis thaliana (Mouse-ear cress).